Reading from the N-terminus, the 529-residue chain is Heat shock protein 60 (529 aa).

The segment at 460–484 (YQATVQHPPPQSSYEEDGRRPPTQP) is disordered.

The polypeptide is Heat shock protein 60 (Giardia intestinalis (Giardia lamblia)).